The primary structure comprises 264 residues: GTP cyclohydrolase FolE2 (264 aa).

Belongs to the GTP cyclohydrolase IV family.

The catalysed reaction is GTP + H2O = 7,8-dihydroneopterin 3'-triphosphate + formate + H(+). It participates in cofactor biosynthesis; 7,8-dihydroneopterin triphosphate biosynthesis; 7,8-dihydroneopterin triphosphate from GTP: step 1/1. In terms of biological role, converts GTP to 7,8-dihydroneopterin triphosphate. In Vesicomyosocius okutanii subsp. Calyptogena okutanii (strain HA), this protein is GTP cyclohydrolase FolE2.